The chain runs to 135 residues: ATP synthase epsilon chain (135 aa).

This sequence belongs to the ATPase epsilon chain family. In terms of assembly, F-type ATPases have 2 components, CF(1) - the catalytic core - and CF(0) - the membrane proton channel. CF(1) has five subunits: alpha(3), beta(3), gamma(1), delta(1), epsilon(1). CF(0) has three main subunits: a, b and c.

It is found in the cell inner membrane. Its function is as follows. Produces ATP from ADP in the presence of a proton gradient across the membrane. The sequence is that of ATP synthase epsilon chain from Rhizobium etli (strain ATCC 51251 / DSM 11541 / JCM 21823 / NBRC 15573 / CFN 42).